The sequence spans 852 residues: Disks large homolog 2 (852 aa).

2 S-palmitoyl cysteine lipidation sites follow: Cys5 and Cys7. The residue at position 28 (Ser28) is a Phosphoserine. A Phosphotyrosine modification is found at Tyr58. Phosphoserine is present on Ser65. PDZ domains follow at residues 98-184 (EITL…VRRR) and 193-279 (EIKL…VGKP). 6 positions are modified to phosphoserine: Ser307, Ser328, Ser360, Ser365, Ser406, and Ser414. The 81-residue stretch at 421–501 (KVVLHKGSTG…QTVTIIAQYQ (81 aa)) folds into the PDZ 3 domain. Tyr505 carries the post-translational modification Phosphotyrosine. A phosphoserine mark is found at Ser528, Ser530, and Ser553. The region spanning 536–606 (KRSLYVRAMF…PSKRRVERKE (71 aa)) is the SH3 domain. Residues 662–837 (TRPVIILGPM…IYNQCKLVIE (176 aa)) enclose the Guanylate kinase-like domain. 2 positions are modified to phosphotyrosine: Tyr732 and Tyr737.

It belongs to the MAGUK family. Interacts through its PDZ domains with NETO1. Interacts with NOS1/nNOS through second PDZ domain. Interacts with KCNJ2/Kir2.1 (via C-terminus) through one of its PDZ domains. Interacts with KCNJ4. Interacts with FRMPD4 (via C-terminus). Interacts with LRFN1. Interacts with LRFN2 and LRFN4. Interacts with FASLG. Interacts with ADAM22. Interacts with DGKI (via PDZ-binding motif). In terms of processing, palmitoylation of isoform 1 and isoform 2 is not required for targeting to postsynaptic density. As to expression, detected in juxtaparanodal zones in the central nervous system and at nerve terminal plexuses of basket cells in the cerebellum (at protein level). Brain. High levels in cerebellar Purkinje cells. Expressed in pyramidal cells of the Ammons's horn and granular cells of the dentate gyrus in the hippocampus as well as cerebral cortex and striatum. High levels in dorsal horn of spinal cord.

Its subcellular location is the cell membrane. The protein localises to the postsynaptic density. The protein resides in the synapse. It is found in the cell projection. It localises to the axon. Its subcellular location is the membrane. The protein localises to the perikaryon. Required for perception of chronic pain through NMDA receptor signaling. Regulates surface expression of NMDA receptors in dorsal horn neurons of the spinal cord. Interacts with the cytoplasmic tail of NMDA receptor subunits as well as inward rectifying potassium channels. Involved in regulation of synaptic stability at cholinergic synapses. Part of the postsynaptic protein scaffold of excitatory synapses. The sequence is that of Disks large homolog 2 (Dlg2) from Rattus norvegicus (Rat).